Reading from the N-terminus, the 489-residue chain is ERO1-like protein alpha (489 aa).

Positions M1–A20 are cleaved as a signal peptide. 8 disulfide bridges follow: C27-C40, C29-C38, C77-C382, C86-C91, C86-C123, C91-C96, C200-C232, and C385-C388. Residues R179, T181, and W192 each coordinate FAD. Residues S243 and H246 each coordinate FAD. N271 is a glycosylation site (N-linked (GlcNAc...) asparagine). The FAD site is built by R278 and R291. N375 carries an N-linked (GlcNAc...) asparagine glycan.

The protein belongs to the EROs family. Predominantly monomer. May function both as a monomer and a homodimer. FAD serves as cofactor. In terms of processing, the Cys-86/Cys-91 and Cys-385/Cys-388 disulfide bonds constitute the redox-active center. The Cys-86/Cys-91 disulfide bond may accept electron from protein disulfide isomerase (PDI) and funnel them to the active site disulfide Cys-385/Cys-388.

Its subcellular location is the endoplasmic reticulum membrane. Its activity is regulated as follows. Enzyme activity is tightly regulated to prevent the accumulation of reactive oxygen species in the endoplasmic reticulum. Reversibly down-regulated by the formation of disulfide bonds between the active site Cys-86 and Cys-123, and between Cys-91 and Cys-96. Glutathione may be required to regulate its activity in the endoplasmic reticulum. In terms of biological role, oxidoreductase involved in disulfide bond formation in the endoplasmic reticulum. Efficiently reoxidizes P4HB/PDI, the enzyme catalyzing protein disulfide formation, in order to allow P4HB to sustain additional rounds of disulfide formation. Following P4HB reoxidation, passes its electrons to molecular oxygen via FAD, leading to the production of reactive oxygen species (ROS) in the cell. Required for the folding of immunoglobulins. This chain is ERO1-like protein alpha, found in Danio rerio (Zebrafish).